Reading from the N-terminus, the 830-residue chain is DNA gyrase subunit A (830 aa).

The 465-residue stretch at 33–497 (LPDVRDGLKP…AENDIDIEDL (465 aa)) folds into the Topo IIA-type catalytic domain. Tyr121 (O-(5'-phospho-DNA)-tyrosine intermediate) is an active-site residue. The GyrA-box signature appears at 524–530 (QKRGGRG). The segment at 805-830 (KDDSEQLEDSEEVSEVHDAEENNSEE) is disordered.

The protein belongs to the type II topoisomerase GyrA/ParC subunit family. As to quaternary structure, heterotetramer, composed of two GyrA and two GyrB chains. In the heterotetramer, GyrA contains the active site tyrosine that forms a transient covalent intermediate with DNA, while GyrB binds cofactors and catalyzes ATP hydrolysis.

The protein localises to the cytoplasm. It catalyses the reaction ATP-dependent breakage, passage and rejoining of double-stranded DNA.. A type II topoisomerase that negatively supercoils closed circular double-stranded (ds) DNA in an ATP-dependent manner to modulate DNA topology and maintain chromosomes in an underwound state. Negative supercoiling favors strand separation, and DNA replication, transcription, recombination and repair, all of which involve strand separation. Also able to catalyze the interconversion of other topological isomers of dsDNA rings, including catenanes and knotted rings. Type II topoisomerases break and join 2 DNA strands simultaneously in an ATP-dependent manner. This is DNA gyrase subunit A from Clostridium acetobutylicum (strain ATCC 824 / DSM 792 / JCM 1419 / IAM 19013 / LMG 5710 / NBRC 13948 / NRRL B-527 / VKM B-1787 / 2291 / W).